Consider the following 290-residue polypeptide: Nucleotide-binding protein LAR_0375 (290 aa).

13 to 20 (GMSGAGKT) is a binding site for ATP. 63–66 (DMRS) is a GTP binding site.

The protein belongs to the RapZ-like family.

Its function is as follows. Displays ATPase and GTPase activities. The chain is Nucleotide-binding protein LAR_0375 from Limosilactobacillus reuteri subsp. reuteri (strain JCM 1112) (Lactobacillus reuteri).